The sequence spans 138 residues: Small ribosomal subunit protein uS9c (138 aa).

It belongs to the universal ribosomal protein uS9 family.

The protein localises to the plastid. It localises to the chloroplast. The protein is Small ribosomal subunit protein uS9c (rps9) of Trieres chinensis (Marine centric diatom).